The sequence spans 609 residues: 2',5'-phosphodiesterase 12 (609 aa).

The transit peptide at 1–42 directs the protein to the mitochondrion; sequence MWRLPGARAALRVIRTAVEKLSRAEAGSQTAAGAMERAVVRC. A compositionally biased stretch (basic residues) spans 89 to 99; the sequence is AAAAKKSRKSR. 2 disordered regions span residues 89 to 111 and 206 to 230; these read AAAAKKSRKSRPNASGGAACSGP and AEPEVGVPSSLSPSSPSSSWTETDV. Low complexity-rich tracts occupy residues 100-111 and 213-224; these read PNASGGAACSGP and PSSLSPSSPSSS. The residue at position 217 (Ser-217) is a Phosphoserine. Positions 351, 496, and 498 each coordinate Mg(2+). Catalysis depends on Asp-496, which acts as the Proton donor/acceptor.

This sequence belongs to the CCR4/nocturin family. It depends on Mg(2+) as a cofactor. As to expression, ubiquitous.

Its subcellular location is the mitochondrion matrix. It catalyses the reaction Exonucleolytic cleavage of poly(A) to 5'-AMP.. Enzyme that cleaves 2',5'-phosphodiester bond linking adenosines of the 5'-triphosphorylated oligoadenylates, triphosphorylated oligoadenylates referred as 2-5A modulates the 2-5A system. Degrades triphosphorylated 2-5A to produce AMP and ATP. Also cleaves 3',5'-phosphodiester bond of oligoadenylates. Plays a role as a negative regulator of the 2-5A system that is one of the major pathways for antiviral and antitumor functions induced by interferons (IFNs). Suppression of this enzyme increases cellular 2-5A levels and decreases viral replication in cultured small-airway epithelial cells and Hela cells. The sequence is that of 2',5'-phosphodiesterase 12 (PDE12) from Homo sapiens (Human).